Reading from the N-terminus, the 74-residue chain is Large ribosomal subunit protein uL29 (74 aa).

The protein belongs to the universal ribosomal protein uL29 family.

This chain is Large ribosomal subunit protein uL29 (rpmC), found in Streptomyces coelicolor (strain ATCC BAA-471 / A3(2) / M145).